The sequence spans 407 residues: Phosphopentomutase (407 aa).

Mn(2+) contacts are provided by Asp11, Asp305, His310, Asp346, His347, and His358.

It belongs to the phosphopentomutase family. It depends on Mn(2+) as a cofactor.

The protein localises to the cytoplasm. It carries out the reaction 2-deoxy-alpha-D-ribose 1-phosphate = 2-deoxy-D-ribose 5-phosphate. The enzyme catalyses alpha-D-ribose 1-phosphate = D-ribose 5-phosphate. It participates in carbohydrate degradation; 2-deoxy-D-ribose 1-phosphate degradation; D-glyceraldehyde 3-phosphate and acetaldehyde from 2-deoxy-alpha-D-ribose 1-phosphate: step 1/2. Functionally, isomerase that catalyzes the conversion of deoxy-ribose 1-phosphate (dRib-1-P) and ribose 1-phosphate (Rib-1-P) to deoxy-ribose 5-phosphate (dRib-5-P) and ribose 5-phosphate (Rib-5-P), respectively. The chain is Phosphopentomutase from Legionella pneumophila (strain Lens).